Here is a 304-residue protein sequence, read N- to C-terminus: Recombination-associated protein RdgC (304 aa).

This sequence belongs to the RdgC family.

The protein resides in the cytoplasm. The protein localises to the nucleoid. Functionally, may be involved in recombination. The polypeptide is Recombination-associated protein RdgC (Dechloromonas aromatica (strain RCB)).